Consider the following 622-residue polypeptide: Dehydrogenase xptC (622 aa).

The N-terminal stretch at 1 to 18 is a signal peptide; the sequence is MAKLSVILLFRSLLLCGA. Residues 47–48, 68–69, and 123–126 contribute to the FAD site; these read VS, EA, and NAMI. Asn160, Asn173, Asn357, Asn364, and Asn480 each carry an N-linked (GlcNAc...) asparagine glycan. An FAD-binding site is contributed by 598-599; that stretch reads PM.

Belongs to the GMC oxidoreductase family. As to quaternary structure, homodimer. The cofactor is FAD.

It participates in secondary metabolite biosynthesis. Dehydrogenase involved in the conversion of monodictyphenone to the prenyl xanthones such as emericellin, shamixanthone and epishamixanthone. Monodictyphenone is first converted to variecoxanthone A via a paeciloxanthone intermediate by the consecutive actions of the FAD-dependent monooxygenase mdpD and the xanthone prenyltransferase xptB. XptB catalyzes regular O-prenylation at the hydroxy group of C-7 of the xanthone ring. Variecoxanthone A is further prenylated to emericellin by xptA before being reduced to shamixanthone and epishamixanthone by the dehydrogenase xptC. The chain is Dehydrogenase xptC from Emericella nidulans (strain FGSC A4 / ATCC 38163 / CBS 112.46 / NRRL 194 / M139) (Aspergillus nidulans).